Here is a 488-residue protein sequence, read N- to C-terminus: Monodehydroascorbate reductase 4, peroxisomal (488 aa).

Over 1-3 the chain is Cytoplasmic; the sequence is MGR. Residues 4-24 traverse the membrane as a helical segment; sequence AFVYVILGGGVAAGYAALEFT. Residues 12–15, glutamate 39, arginine 46, lysine 51, and 145–146 contribute to the FAD site; these read GGVA and RD. The Peroxisomal segment spans residues 25-458; that stretch reads RRGVSDGELC…SASVVMIKKP (434 aa). NAD(+) contacts are provided by residues 170-176, glutamate 194, arginine 200, and glycine 259; that span reads GGYIGME. Position 172–176 (172–176) interacts with NADP(+); that stretch reads YIGME. NADP(+) contacts are provided by arginine 200 and glycine 259. Aspartate 296 serves as a coordination point for FAD. 312 to 313 lines the NAD(+) pocket; it reads EH. 312–313 serves as a coordination point for NADP(+); that stretch reads EH. Valine 314 lines the FAD pocket. Arginine 318 lines the L-ascorbate pocket. Tyrosine 344 contributes to the FAD binding site. Tyrosine 344 contributes to the NAD(+) binding site. Tyrosine 344 serves as a coordination point for NADP(+). Residue arginine 346 coordinates L-ascorbate. The helical transmembrane segment at 459 to 479 threads the bilayer; it reads LYVWHAATGVVVAASVAAFAF. Over 480-488 the chain is Cytoplasmic; sequence WYGRRRRRW.

It belongs to the FAD-dependent oxidoreductase family. It depends on FAD as a cofactor.

It is found in the peroxisome membrane. The enzyme catalyses 2 monodehydro-L-ascorbate radical + NADH + H(+) = 2 L-ascorbate + NAD(+). Its function is as follows. Catalyzes the conversion of monodehydroascorbate to ascorbate, oxidizing NADH in the process. Involved in the detoxification of H(2)O(2) that escapes the peroxisome and causes oxidative damage to oil bodies. This is Monodehydroascorbate reductase 4, peroxisomal from Arabidopsis thaliana (Mouse-ear cress).